A 468-amino-acid polypeptide reads, in one-letter code: WD repeat-containing protein 55 homolog (468 aa).

Residues 1–107 form a disordered region; that stretch reads MRNFNSPKFG…VPKRVIDDYD (107 aa). Composition is skewed to acidic residues over residues 15–26, 41–58, and 67–91; these read DDSDDDDFDSGT, PITE…EYNP, and SDDE…DGED. WD repeat units follow at residues 134–173, 178–217, 221–259, 262–301, 304–343, and 388–427; these read KTED…CTIV, THTK…LKRF, AHEE…PVFK, EVED…MYVQ, PYEE…YHCD, and QHSL…EFDD.

This sequence belongs to the WD repeat WDR55 family.

This is WD repeat-containing protein 55 homolog from Aedes aegypti (Yellowfever mosquito).